The chain runs to 206 residues: Glycerol-3-phosphate acyltransferase (206 aa).

6 helical membrane passes run Ile6–Phe26, Lys57–Ala77, Phe86–Trp106, Val118–Leu138, Ile143–Leu163, and Glu165–Trp185.

The protein belongs to the PlsY family. As to quaternary structure, probably interacts with PlsX.

The protein localises to the cell inner membrane. It catalyses the reaction an acyl phosphate + sn-glycerol 3-phosphate = a 1-acyl-sn-glycero-3-phosphate + phosphate. Its pathway is lipid metabolism; phospholipid metabolism. Catalyzes the transfer of an acyl group from acyl-phosphate (acyl-PO(4)) to glycerol-3-phosphate (G3P) to form lysophosphatidic acid (LPA). This enzyme utilizes acyl-phosphate as fatty acyl donor, but not acyl-CoA or acyl-ACP. This is Glycerol-3-phosphate acyltransferase from Prochlorococcus marinus (strain MIT 9211).